The sequence spans 204 residues: Large ribosomal subunit protein uL4 (204 aa).

The interval 49 to 75 (TKGRSDVSGGGKKPWRQKGRGGARAGS) is disordered.

This sequence belongs to the universal ribosomal protein uL4 family. As to quaternary structure, part of the 50S ribosomal subunit.

In terms of biological role, one of the primary rRNA binding proteins, this protein initially binds near the 5'-end of the 23S rRNA. It is important during the early stages of 50S assembly. It makes multiple contacts with different domains of the 23S rRNA in the assembled 50S subunit and ribosome. Functionally, forms part of the polypeptide exit tunnel. This Campylobacter jejuni subsp. doylei (strain ATCC BAA-1458 / RM4099 / 269.97) protein is Large ribosomal subunit protein uL4.